The following is a 533-amino-acid chain: Bifunctional aspartate aminotransferase and L-aspartate beta-decarboxylase (533 aa).

2 residues coordinate L-aspartate: G115 and N256. Residue K315 is modified to N6-(pyridoxal phosphate)lysine. R497 serves as a coordination point for L-aspartate.

The protein belongs to the class-I pyridoxal-phosphate-dependent aminotransferase family. Homododecamer. The cofactor is pyridoxal 5'-phosphate.

It catalyses the reaction L-aspartate + H(+) = L-alanine + CO2. The catalysed reaction is L-aspartate + 2-oxoglutarate = oxaloacetate + L-glutamate. Its function is as follows. Bifunctional enzyme that has both L-aspartate decarboxylase and transaminase activity. The protein is Bifunctional aspartate aminotransferase and L-aspartate beta-decarboxylase of Comamonas testosteroni (Pseudomonas testosteroni).